A 40-amino-acid chain; its full sequence is SRGISRYITKKNRHNTPSRLELRKFCPFCCKHMIHAEIKK.

This sequence belongs to the bacterial ribosomal protein bL33 family.

The protein localises to the plastid. Its subcellular location is the chloroplast. This Pisum sativum (Garden pea) protein is Large ribosomal subunit protein bL33c (rpl33).